We begin with the raw amino-acid sequence, 187 residues long: Corticoliberin (187 aa).

The first 24 residues, 1-24 (MRLRLLVSAGMLLVALSPCLPCRA), serve as a signal peptide directing secretion. A propeptide spanning residues 25 to 144 (LLSRGSVSGA…HQGALERERR (120 aa)) is cleaved from the precursor. The disordered stretch occupies residues 75-95 (AARLSPNSTPLTAGRGSRPSH). Isoleucine amide is present on Ile185.

The protein belongs to the sauvagine/corticotropin-releasing factor/urotensin I family. In terms of assembly, interacts (via C-terminus) with CRFR1 (via N-terminal extracellular domain). As to expression, produced by the hypothalamus.

It is found in the secreted. Hormone regulating the release of corticotropin from pituitary gland. Induces NLRP6 in intestinal epithelial cells, hence may influence gut microbiota profile. In Rattus norvegicus (Rat), this protein is Corticoliberin (Crh).